Here is a 558-residue protein sequence, read N- to C-terminus: Formate--tetrahydrofolate ligase (558 aa).

Residue 66–73 participates in ATP binding; the sequence is TPAGEGKT.

The protein belongs to the formate--tetrahydrofolate ligase family.

It catalyses the reaction (6S)-5,6,7,8-tetrahydrofolate + formate + ATP = (6R)-10-formyltetrahydrofolate + ADP + phosphate. Its pathway is one-carbon metabolism; tetrahydrofolate interconversion. This Clostridium kluyveri (strain NBRC 12016) protein is Formate--tetrahydrofolate ligase.